We begin with the raw amino-acid sequence, 323 residues long: Malate dehydrogenase (323 aa).

Residues 20–25 and Asp44 each bind NAD(+); that span reads GAGRVG. Residues Arg93 and Arg99 each contribute to the substrate site. NAD(+) contacts are provided by residues Asn106 and 129–131; that span reads VTN. Positions 131 and 162 each coordinate substrate. The active-site Proton acceptor is the His186.

Belongs to the LDH/MDH superfamily. MDH type 3 family.

It carries out the reaction (S)-malate + NAD(+) = oxaloacetate + NADH + H(+). In terms of biological role, catalyzes the reversible oxidation of malate to oxaloacetate. The chain is Malate dehydrogenase from Nostoc sp. (strain PCC 7120 / SAG 25.82 / UTEX 2576).